The primary structure comprises 697 residues: Elongation factor G 2 (697 aa).

The 276-residue stretch at 5–280 folds into the tr-type G domain; sequence SKYRNIGIFA…AVVDYLPAPD (276 aa). GTP-binding positions include 14–21, 78–82, and 132–135; these read AHVDAGKT, DTPGH, and NKLD.

The protein belongs to the TRAFAC class translation factor GTPase superfamily. Classic translation factor GTPase family. EF-G/EF-2 subfamily.

It is found in the cytoplasm. Its function is as follows. Catalyzes the GTP-dependent ribosomal translocation step during translation elongation. During this step, the ribosome changes from the pre-translocational (PRE) to the post-translocational (POST) state as the newly formed A-site-bound peptidyl-tRNA and P-site-bound deacylated tRNA move to the P and E sites, respectively. Catalyzes the coordinated movement of the two tRNA molecules, the mRNA and conformational changes in the ribosome. The polypeptide is Elongation factor G 2 (Shewanella sp. (strain MR-7)).